The following is a 25-amino-acid chain: Antimicrobial peptide THP3 (25 aa).

It localises to the secreted. Its function is as follows. Bactericidal activity; inhibits Staphylococcus aureus. This is Antimicrobial peptide THP3 from Meleagris gallopavo (Wild turkey).